The primary structure comprises 69 residues: uncharacterized protein (69 aa).

This is an uncharacterized protein from Sinorhizobium fredii (strain NBRC 101917 / NGR234).